The primary structure comprises 330 residues: Ketol-acid reductoisomerase (NADP(+)) (330 aa).

The region spanning 1-181 (MNVYYEQDAD…GGAKAGVIET (181 aa)) is the KARI N-terminal Rossmann domain. Residues 24-27 (YGSQ), Arg47, Ser50, Ser52, and 82-85 (DQYQ) contribute to the NADP(+) site. His107 is a catalytic residue. Gly133 contacts NADP(+). Positions 182 to 327 (TIKNETETDL…AKLRNMMSWL (146 aa)) constitute a KARI C-terminal knotted domain. The Mg(2+) site is built by Asp190, Glu194, Glu226, and Glu230. Ser251 is a binding site for substrate.

Belongs to the ketol-acid reductoisomerase family. Mg(2+) serves as cofactor.

It catalyses the reaction (2R)-2,3-dihydroxy-3-methylbutanoate + NADP(+) = (2S)-2-acetolactate + NADPH + H(+). The enzyme catalyses (2R,3R)-2,3-dihydroxy-3-methylpentanoate + NADP(+) = (S)-2-ethyl-2-hydroxy-3-oxobutanoate + NADPH + H(+). It functions in the pathway amino-acid biosynthesis; L-isoleucine biosynthesis; L-isoleucine from 2-oxobutanoate: step 2/4. It participates in amino-acid biosynthesis; L-valine biosynthesis; L-valine from pyruvate: step 2/4. Involved in the biosynthesis of branched-chain amino acids (BCAA). Catalyzes an alkyl-migration followed by a ketol-acid reduction of (S)-2-acetolactate (S2AL) to yield (R)-2,3-dihydroxy-isovalerate. In the isomerase reaction, S2AL is rearranged via a Mg-dependent methyl migration to produce 3-hydroxy-3-methyl-2-ketobutyrate (HMKB). In the reductase reaction, this 2-ketoacid undergoes a metal-dependent reduction by NADPH to yield (R)-2,3-dihydroxy-isovalerate. The sequence is that of Ketol-acid reductoisomerase (NADP(+)) from Chlorobium phaeovibrioides (strain DSM 265 / 1930) (Prosthecochloris vibrioformis (strain DSM 265)).